The following is a 536-amino-acid chain: Keratin, type II cytoskeletal 4 (536 aa).

Residues 1 to 145 are head; that stretch reads MISRQSSVRG…DPEIQKIRTA (145 aa). An Omega-N-methylarginine modification is found at Arg13. A coil 1A region spans residues 146–181; the sequence is EREQIKTLNNKFASFIDKVRFLEQQNKVLETKWNLL. Residues 146–457 form the IF rod domain; sequence EREQIKTLNN…KLLEGEECRM (312 aa). The tract at residues 182-200 is linker 1; the sequence is QQQTTTTSPRNLDPFFETY. Residues 201 to 293 form a coil 1B region; it reads INALRKNLDT…LYEAELSQMQ (93 aa). Positions 294 to 316 are linker 12; that stretch reads THVSDTSVVLSMDNNRNLDLDGI. Residues 317-454 form a coil 2 region; sequence IAEVRAQYEE…TYRKLLEGEE (138 aa). The tract at residues 455–524 is tail; it reads CRMSGECKSA…TSSATITKRS (70 aa). Residues 515-536 are disordered; that stretch reads TSSATITKRSPRTRQDPDGLQP. Basic and acidic residues predominate over residues 527 to 536; that stretch reads TRQDPDGLQP.

It belongs to the intermediate filament family. In terms of assembly, heterotetramer of two type I and two type II keratins. keratin-4 is generally associated with keratin-13.

This is Keratin, type II cytoskeletal 4 from Rattus norvegicus (Rat).